Consider the following 601-residue polypeptide: MLIARNFILMSKSLAWSQASLQPWIHDAIDSLGFRSMTPVQASTIPLFCGNKDVVVEAVTGSGKTLAFAIPVLERVTKCMKENRGSSGLYGIVISPTRELANQINTVFHTLLQFYPEDQPPIKTQLIVGSLATVREDLNAFAENKPQIIIATPGRLLDFFSSNAVKRSTVEMVVLDEADRLLDISFQNDVVSILKKLPKQRRTGLFSATLSSAGDSIFRTGMSNPVKISVNSNKAESKPQSLTVNYMMVNPETKIAVLINMLSTLQYKKCIVYFPTCASVKYFYSVFQKLHPLEDVNLTSIHGQLLAKARLKAMNKFTEGDVRTSKHVLLTTDVAARGIDIPEVDLVIQLDPPTDPDMFLHRCGRTGRANKVGRAIVMLNNNALESDYVDFMEVKGLKMSEVESPDVIDAYKAFSKNLRNLMLQDRAFHETAIKAYVGFVRYYSKHAATSIFRLQTLDYIGLAKAYGLLRLPKMPESRFVPNDRMPEDGWLGEKIDMNKYAYADPAKEKIRLETMEEEWNKKVNDAKRRKELKVKNEAWSSKNEKKEGKQERREKMKRKREAIEKQIMNESSDEETVVDWKDLVREKKQKTSGISGSFDDL.

The Q motif motif lies at 14-42; sequence LAWSQASLQPWIHDAIDSLGFRSMTPVQA. The region spanning 45–228 is the Helicase ATP-binding domain; that stretch reads IPLFCGNKDV…RTGMSNPVKI (184 aa). An ATP-binding site is contributed by 58–65; the sequence is AVTGSGKT. The DEAD box signature appears at 176–179; it reads DEAD. The 163-residue stretch at 257 to 419 folds into the Helicase C-terminal domain; it reads VLINMLSTLQ…AYKAFSKNLR (163 aa). The stretch at 507–575 forms a coiled coil; sequence KEKIRLETME…QIMNESSDEE (69 aa). Positions 532–554 are enriched in basic and acidic residues; the sequence is LKVKNEAWSSKNEKKEGKQERRE. Residues 532-576 form a disordered region; that stretch reads LKVKNEAWSSKNEKKEGKQERREKMKRKREAIEKQIMNESSDEET.

The protein belongs to the DEAD box helicase family. DDX55/SPB4 subfamily. In terms of assembly, component of pre-60S ribosomal complexes.

The protein localises to the nucleus. Its subcellular location is the nucleolus. It carries out the reaction ATP + H2O = ADP + phosphate + H(+). Its function is as follows. ATP-binding RNA helicase involved in the biogenesis of 60S ribosomal subunits. Binds 90S pre-ribosomal particles and dissociates from pre-60S ribosomal particles after processing of 27SB pre-rRNA. Required for the normal formation of 18S rRNA through the processing of pre-rRNAs at sites A0, A1 and A2, and the normal formation of 25S and 5.8S rRNAs through the processing of pre-rRNAs at sites C1 and C2. The protein is ATP-dependent rRNA helicase SPB4 of Meyerozyma guilliermondii (strain ATCC 6260 / CBS 566 / DSM 6381 / JCM 1539 / NBRC 10279 / NRRL Y-324) (Yeast).